A 365-amino-acid polypeptide reads, in one-letter code: Chorismate synthase (365 aa).

The interval 41–61 (IQKELDRRRPGQSEVSTPRHE) is disordered. Arg48 is an NADP(+) binding site. FMN contacts are provided by residues 125 to 127 (RSS), Gly285, 300 to 304 (KPTPS), and Arg327.

It belongs to the chorismate synthase family. Requires FMNH2 as cofactor.

The enzyme catalyses 5-O-(1-carboxyvinyl)-3-phosphoshikimate = chorismate + phosphate. It functions in the pathway metabolic intermediate biosynthesis; chorismate biosynthesis; chorismate from D-erythrose 4-phosphate and phosphoenolpyruvate: step 7/7. Its function is as follows. Catalyzes the anti-1,4-elimination of the C-3 phosphate and the C-6 proR hydrogen from 5-enolpyruvylshikimate-3-phosphate (EPSP) to yield chorismate, which is the branch point compound that serves as the starting substrate for the three terminal pathways of aromatic amino acid biosynthesis. This reaction introduces a second double bond into the aromatic ring system. In Methanosarcina barkeri (strain Fusaro / DSM 804), this protein is Chorismate synthase.